We begin with the raw amino-acid sequence, 45 residues long: Temporin-SHf (45 aa).

A signal peptide spans 1-10; it reads FLGTINLSLC. Residues 11–35 constitute a propeptide that is removed on maturation; the sequence is EEERDADEEERRDEPDESNVEVKKR. The residue at position 43 (phenylalanine 43) is a Phenylalanine amide.

The protein belongs to the frog skin active peptide (FSAP) family. Temporin subfamily.

The protein resides in the secreted. Its subcellular location is the target cell membrane. Its function is as follows. Non-amphipathic alpha-helical antimicrobial peptide with potent activity against some Gram-positive bacteria (including methicillin-resistant Staphylococcus aureus (MRSA)), weak activity against Gram-negative bacteria and no activity against fungi. Permeabilizates membranes through a detergent-like effect probably via the carpet mechanism. More precisely, it strongly and selectively perturbs anionic bilayers membranes by interacting with the polar headgroups and the glycerol backbone region of the phospholipids, hence disrupting the acyl chain packing of the bilayer. Is not active against Leishmania (promastigote and axenic amastigote forms). Does not show hemolytic activity. Does not show toxicity for human THP-1-derived macrophages. The sequence is that of Temporin-SHf from Pelophylax saharicus (Sahara frog).